Reading from the N-terminus, the 469-residue chain is MFAEDLDRILSGKYPGKSHALRVVELLREKVPNAKGYLYLEGRMSKLLEDSDEFEPFRQRRHFYYLTGCDLSNCYLLYDIDSSKSTLFIPPIDPEEVVWSGLPLSPQQGLEKYDVDEVKFSTELDNILSHLSGSQESTVYTIADQVCPHIKFGLDNVDSSILKGVIDRCRVVKDKYEVAMIRKANNISSLGHEAITKQASKASNEMQLEATFLGHCVAHGAKKMAYPPIVAAGRSGAILHYEANDQPLGGKQNLLVDAGAEWNNYASDITRTFPLSGTFTKESRQIYDIVYKMQMECIAIIKAGVRWEDVHMLAHEIAVEGLLQLGIFQGAKADILKAQTSLAFFPHGLGHYLGLDTHDVGGNPNFDDENKYLRYLRTRGTLPAGSVVTVEPGIYFCEHIIRPYLQDERHKDLINSDVLDKYWDVGGIRLTQGSIEDNVLVTPTGVDNLTTTIKHPDQLEGMIRGLEGV.

Mn(2+) contacts are provided by D257, D268, E391, and E436.

This sequence belongs to the peptidase M24B family. The cofactor is Mn(2+).

The enzyme catalyses Release of any N-terminal amino acid, including proline, that is linked to proline, even from a dipeptide or tripeptide.. In terms of biological role, catalyzes the removal of a penultimate prolyl residue from the N-termini of peptides. The sequence is that of Probable Xaa-Pro aminopeptidase PEPP (PEPP) from Fusarium vanettenii (strain ATCC MYA-4622 / CBS 123669 / FGSC 9596 / NRRL 45880 / 77-13-4) (Fusarium solani subsp. pisi).